The sequence spans 384 residues: Spermidine/putrescine import ATP-binding protein PotA (384 aa).

The ABC transporter domain occupies 6-238 (IAFKNVSKVF…PINHFVATFI (233 aa)). 40–47 (GASGSGKS) contributes to the ATP binding site.

Belongs to the ABC transporter superfamily. Spermidine/putrescine importer (TC 3.A.1.11.1) family. In terms of assembly, the complex is composed of two ATP-binding proteins (PotA), two transmembrane proteins (PotB and PotC) and a solute-binding protein (PotD).

The protein localises to the cell membrane. It carries out the reaction ATP + H2O + polyamine-[polyamine-binding protein]Side 1 = ADP + phosphate + polyamineSide 2 + [polyamine-binding protein]Side 1.. Its function is as follows. Part of the ABC transporter complex PotABCD involved in spermidine/putrescine import. Responsible for energy coupling to the transport system. In Streptococcus agalactiae serotype Ia (strain ATCC 27591 / A909 / CDC SS700), this protein is Spermidine/putrescine import ATP-binding protein PotA.